Reading from the N-terminus, the 464-residue chain is Citrate synthase, mitochondrial (464 aa).

The transit peptide at 1–27 directs the protein to the mitochondrion; the sequence is MALLTAATRLLGAKNSSCLVLAARHAS. The SIFI-degron motif lies at 2–21; that stretch reads ALLTAATRLLGAKNSSCLVL. Lys57 carries the post-translational modification N6-succinyllysine. The residue at position 76 (Lys76) is an N6-acetyllysine; alternate. At Lys76 the chain carries N6-succinyllysine; alternate. N6-succinyllysine occurs at positions 103 and 193. Phosphoserine is present on Ser226. His301 is a catalytic residue. Lys321 and Lys327 each carry N6-acetyllysine; alternate. 2 positions are modified to N6-succinyllysine; alternate: Lys321 and Lys327. The active site involves His347. Arg356 contacts oxaloacetate. An N6-acetyllysine; alternate modification is found at Lys375. Lys375 is modified (N6-succinyllysine; alternate). Lys382 carries the N6-acetyllysine modification. Lys393 is subject to N6-acetyllysine; alternate. Lys393 carries the post-translational modification N6-succinyllysine; alternate. Lys395 bears the N6,N6,N6-trimethyllysine mark. The active site involves Asp402. Oxaloacetate is bound by residues Arg428 and Arg448. At Lys450 the chain carries N6-succinyllysine. Residue Lys459 is modified to N6-acetyllysine; alternate. At Lys459 the chain carries N6-succinyllysine; alternate.

The protein belongs to the citrate synthase family. As to quaternary structure, homodimer. In terms of processing, methylated. Trimethylation at Lys-395 by CSKMT decreases citrate synthase activity. Post-translationally, in response to mitochondrial stress, the precursor protein is ubiquitinated by the SIFI complex in the cytoplasm before mitochondrial import, leading to its degradation. Within the SIFI complex, UBR4 initiates ubiquitin chain that are further elongated or branched by KCMF1.

It is found in the mitochondrion matrix. It carries out the reaction oxaloacetate + acetyl-CoA + H2O = citrate + CoA + H(+). It participates in carbohydrate metabolism; tricarboxylic acid cycle; isocitrate from oxaloacetate: step 1/2. Functionally, key enzyme of the Krebs tricarboxylic acid cycle which catalyzes the synthesis of citrate from acetyl coenzyme A and oxaloacetate. The chain is Citrate synthase, mitochondrial (Cs) from Mus musculus (Mouse).